The sequence spans 468 residues: Tripartite motif-containing protein 75 (468 aa).

The RING-type zinc finger occupies 16 to 57 (CSICLDYLSDPVTIECGHNFCRSCIQQSWLDLQELFPCPVCR). Residues 92 to 133 (EETTLCEKHNQPLSVFCKEDLMVLCPLCTQPPDHQGHHVRPI) form a B box-type zinc finger. The Zn(2+) site is built by Cys-97, His-100, Cys-119, and His-125. Positions 170-222 (LELREMVENQRQELSSEFEHLNQFLDREQQAVLSRLAEEEKDNQQKLSANITA) form a coiled coil. A B30.2/SPRY domain is found at 276–468 (CSFPPQYSAL…LRICTGTVCE (193 aa)).

It belongs to the TRIM/RBCC family.

It is found in the cytoplasm. Its subcellular location is the cytoskeleton. The protein resides in the spindle. May play a role in female meiosis. This chain is Tripartite motif-containing protein 75, found in Homo sapiens (Human).